The following is a 499-amino-acid chain: NAD(P)H-quinone oxidoreductase chain 4, chloroplastic (499 aa).

14 helical membrane-spanning segments follow: residues 4-24 (FPWL…IFFL), 35-55 (YTIY…CYNF), 84-104 (GLSI…TLAA), 111-129 (SRLF…IGSF), 134-154 (LLLF…LLSV), 167-187 (FILY…GIGL), 208-228 (ALEI…LPII), 242-262 (HYST…YGLI), 272-292 (AHSI…IYAA), 305-325 (IAYS…SITD), 330-350 (GAVL…FLAG), 386-406 (LALP…GIIT), 416-436 (IVIT…SLSM), and 462-482 (LFVL…PDFV).

Belongs to the complex I subunit 4 family.

It is found in the plastid. The protein resides in the chloroplast thylakoid membrane. The catalysed reaction is a plastoquinone + NADH + (n+1) H(+)(in) = a plastoquinol + NAD(+) + n H(+)(out). It carries out the reaction a plastoquinone + NADPH + (n+1) H(+)(in) = a plastoquinol + NADP(+) + n H(+)(out). This is NAD(P)H-quinone oxidoreductase chain 4, chloroplastic from Citrus sinensis (Sweet orange).